Here is an 88-residue protein sequence, read N- to C-terminus: Acylphosphatase (88 aa).

Residues Ala-3–Gly-88 enclose the Acylphosphatase-like domain. Active-site residues include Arg-18 and Asn-36.

Belongs to the acylphosphatase family.

It catalyses the reaction an acyl phosphate + H2O = a carboxylate + phosphate + H(+). The sequence is that of Acylphosphatase (acyP) from Xanthomonas oryzae pv. oryzae (strain MAFF 311018).